Reading from the N-terminus, the 233-residue chain is Nickel import system ATP-binding protein NikE (233 aa).

In terms of domain architecture, ABC transporter spans 2–228 (IELKHVTFGY…DRHPYTKELV (227 aa)). Residue 35-42 (GESGCGKS) participates in ATP binding.

It belongs to the ABC transporter superfamily. In terms of assembly, the complex is composed of two ATP-binding proteins (NikD and NikE), two transmembrane proteins (NikB and NikC) and a solute-binding protein (NikA).

The protein resides in the cell membrane. The catalysed reaction is Ni(2+)(out) + ATP + H2O = Ni(2+)(in) + ADP + phosphate + H(+). Its function is as follows. Part of the ABC transporter complex NikABCDE (Opp2) involved in nickel import. Probably responsible for energy coupling to the transport system. The sequence is that of Nickel import system ATP-binding protein NikE from Staphylococcus aureus (strain MSSA476).